Consider the following 854-residue polypeptide: Gamma-secretase-activating protein (854 aa).

It belongs to the GSAP family. As to quaternary structure, interacts with APP; specifically interacts with the CTF-alpha product of APP. Interacts with the gamma-secretase complex. Post-translationally, the protein is first synthesized as a holoprotein form of 98 kDa and rapidly processed into the gamma-secretase-activating protein 16 kDa C-terminal form, which constitutes the predominant form. Widely expressed.

It localises to the golgi apparatus. The protein resides in the trans-Golgi network. Its function is as follows. Regulator of gamma-secretase activity, which specifically activates the production of amyloid-beta protein (amyloid-beta protein 40 and amyloid-beta protein 42), without affecting the cleavage of other gamma-secretase targets such has Notch. The gamma-secretase complex is an endoprotease complex that catalyzes the intramembrane cleavage of integral membrane proteins such as Notch receptors and APP (amyloid-beta precursor protein). Specifically promotes the gamma-cleavage of APP CTF-alpha (also named APP-CTF) by the gamma-secretase complex to generate amyloid-beta, while it reduces the epsilon-cleavage of APP CTF-alpha, leading to a low production of AICD. The chain is Gamma-secretase-activating protein (GSAP) from Homo sapiens (Human).